A 102-amino-acid chain; its full sequence is Small ribosomal subunit protein uS10 (102 aa).

The protein belongs to the universal ribosomal protein uS10 family. In terms of assembly, part of the 30S ribosomal subunit.

Functionally, involved in the binding of tRNA to the ribosomes. The sequence is that of Small ribosomal subunit protein uS10 from Treponema pallidum (strain Nichols).